Reading from the N-terminus, the 544-residue chain is Chaperonin GroEL (544 aa).

Residues 29-32 (TLGP), 86-90 (DGTTT), glycine 413, 476-478 (NAL), and aspartate 492 each bind ATP.

The protein belongs to the chaperonin (HSP60) family. As to quaternary structure, forms a cylinder of 14 subunits composed of two heptameric rings stacked back-to-back. Interacts with the co-chaperonin GroES.

It is found in the cytoplasm. The catalysed reaction is ATP + H2O + a folded polypeptide = ADP + phosphate + an unfolded polypeptide.. In terms of biological role, together with its co-chaperonin GroES, plays an essential role in assisting protein folding. The GroEL-GroES system forms a nano-cage that allows encapsulation of the non-native substrate proteins and provides a physical environment optimized to promote and accelerate protein folding. This is Chaperonin GroEL from Desulfitobacterium hafniense (strain DSM 10664 / DCB-2).